A 966-amino-acid chain; its full sequence is Translation initiation factor IF-2 (966 aa).

5 stretches are compositionally biased toward basic and acidic residues: residues 99–113, 123–183, 197–212, 220–249, and 266–277; these read KRDEAGADQHNEAAD, EQAR…KAEE, DASRKKAEDEQARVAV, AADDAKAAADKARAEQDAARKRREAAEAEA, and PSERKAEEKKAE. The disordered stretch occupies residues 99-382; it reads KRDEAGADQH…NFQAPTEPVV (284 aa). A compositionally biased stretch (low complexity) spans 304-315; that stretch reads AATTTTTTATTT. A compositionally biased stretch (gly residues) spans 346–359; sequence SSGGVGGWRGGPRG. Positions 466 to 635 constitute a tr-type G domain; sequence PRPPVVTVMG…LLQAEVLELK (170 aa). The G1 stretch occupies residues 475–482; sequence GHVDHGKT. 475-482 is a GTP binding site; the sequence is GHVDHGKT. The tract at residues 500–504 is G2; it reads GITQH. A G3 region spans residues 521–524; the sequence is DTPG. Residues 521-525 and 575-578 each bind GTP; these read DTPGH and NKID. A G4 region spans residues 575 to 578; it reads NKID. The tract at residues 611–613 is G5; it reads SAK.

It belongs to the TRAFAC class translation factor GTPase superfamily. Classic translation factor GTPase family. IF-2 subfamily.

The protein resides in the cytoplasm. Functionally, one of the essential components for the initiation of protein synthesis. Protects formylmethionyl-tRNA from spontaneous hydrolysis and promotes its binding to the 30S ribosomal subunits. Also involved in the hydrolysis of GTP during the formation of the 70S ribosomal complex. The chain is Translation initiation factor IF-2 from Cupriavidus pinatubonensis (strain JMP 134 / LMG 1197) (Cupriavidus necator (strain JMP 134)).